The chain runs to 325 residues: tRNA dimethylallyltransferase (325 aa).

Residue 11–18 (GPTASGKS) coordinates ATP. 13–18 (TASGKS) serves as a coordination point for substrate. Interaction with substrate tRNA stretches follow at residues 36–39 (DSMQ) and 160–164 (QRLIR).

The protein belongs to the IPP transferase family. In terms of assembly, monomer. Requires Mg(2+) as cofactor.

It catalyses the reaction adenosine(37) in tRNA + dimethylallyl diphosphate = N(6)-dimethylallyladenosine(37) in tRNA + diphosphate. Its function is as follows. Catalyzes the transfer of a dimethylallyl group onto the adenine at position 37 in tRNAs that read codons beginning with uridine, leading to the formation of N6-(dimethylallyl)adenosine (i(6)A). This chain is tRNA dimethylallyltransferase, found in Rickettsia canadensis (strain McKiel).